Reading from the N-terminus, the 185-residue chain is Ribosome-recycling factor (185 aa).

It belongs to the RRF family.

The protein localises to the cytoplasm. Functionally, responsible for the release of ribosomes from messenger RNA at the termination of protein biosynthesis. May increase the efficiency of translation by recycling ribosomes from one round of translation to another. This chain is Ribosome-recycling factor, found in Haemophilus influenzae (strain ATCC 51907 / DSM 11121 / KW20 / Rd).